We begin with the raw amino-acid sequence, 643 residues long: 1-deoxy-D-xylulose-5-phosphate synthase (643 aa).

Thiamine diphosphate contacts are provided by residues His-78 and 119-121; that span reads AHS. Mg(2+) is bound at residue Asp-150. Residues 151–152, Asn-179, Tyr-288, and Glu-370 each bind thiamine diphosphate; that span reads GS. Asn-179 provides a ligand contact to Mg(2+).

It belongs to the transketolase family. DXPS subfamily. In terms of assembly, homodimer. It depends on Mg(2+) as a cofactor. Requires thiamine diphosphate as cofactor.

It catalyses the reaction D-glyceraldehyde 3-phosphate + pyruvate + H(+) = 1-deoxy-D-xylulose 5-phosphate + CO2. The protein operates within metabolic intermediate biosynthesis; 1-deoxy-D-xylulose 5-phosphate biosynthesis; 1-deoxy-D-xylulose 5-phosphate from D-glyceraldehyde 3-phosphate and pyruvate: step 1/1. In terms of biological role, catalyzes the acyloin condensation reaction between C atoms 2 and 3 of pyruvate and glyceraldehyde 3-phosphate to yield 1-deoxy-D-xylulose-5-phosphate (DXP). The chain is 1-deoxy-D-xylulose-5-phosphate synthase from Brucella suis (strain ATCC 23445 / NCTC 10510).